The sequence spans 495 residues: UDP-glycosyltransferase 73C13 (495 aa).

H24 (proton acceptor) is an active-site residue. H24 lines the an anthocyanidin pocket. The Charge relay role is filled by D129. UDP-alpha-D-glucose is bound by residues A356, Q358, H373, W376, N377, S378, and E381. Residue A396 coordinates an anthocyanidin. Residues D397 and Q398 each coordinate UDP-alpha-D-glucose.

Belongs to the UDP-glycosyltransferase family.

The catalysed reaction is oleanolate + UDP-alpha-D-glucose = oleanolate 3-O-beta-D-glucoside + UDP + H(+). Functionally, catalyzes the transfer of a glucose (Glc) moiety from UDP-Glc to the C-3 position of the oleanane sapogenins oleanolate and hederagenin, and to the C-28 carboxylic group of the lupane sapogenin betulinate. The monoglucosylated hederagenin 3-O-beta-D-glucoside is a feeding deterrent of the yellow-striped flea beetle (Phyllotreta nemorum). This chain is UDP-glycosyltransferase 73C13, found in Barbarea vulgaris (Yellow rocket).